Reading from the N-terminus, the 191-residue chain is MARILVIFHSITGNTMKLAKAVADGAREGGAEVAVKRVPETIPAEILEKNPGYVKVREELESFEVARPEELQDYDAIIFGSPTRFGVMSSQMKQFIDMTGRLWMERRLEGKVGAVFTSNEMPHGGKEATLLSMLLPLFAHGMIIVGLPPAKELYRAGSYYGAASTGVPKEDDLQVAKMLGKRVAEVAEKLC.

The region spanning 4-184 (ILVIFHSITG…VAKMLGKRVA (181 aa)) is the Flavodoxin-like domain. Residues 10-15 (SITGNT), 83-85 (TRF), and 118-124 (SNEMPHG) each bind FMN.

It belongs to the WrbA family. In terms of assembly, homodimer and homotetramer; in equilibrium. The cofactor is FMN.

It catalyses the reaction a quinone + NADH + H(+) = a quinol + NAD(+). It carries out the reaction a quinone + NADPH + H(+) = a quinol + NADP(+). Its function is as follows. It seems to function in response to environmental stress when various electron transfer chains are affected or when the environment is highly oxidizing. It reduces quinones to the hydroquinone state to prevent interaction of the semiquinone with O2 and production of superoxide. It prefers NADH over NADPH. This chain is NAD(P)H dehydrogenase (quinone), found in Archaeoglobus fulgidus (strain ATCC 49558 / DSM 4304 / JCM 9628 / NBRC 100126 / VC-16).